A 616-amino-acid polypeptide reads, in one-letter code: Protein phosphatase EYA4 (616 aa).

Position 1 is an N-acetylmethionine (methionine 1). 3 disordered regions span residues 1–66, 186–211, and 277–345; these read MEDT…VTTN, SQTQ…PGQT, and ADGT…DSDL. Residues lysine 14 and lysine 52 each participate in a glycyl lysine isopeptide (Lys-Gly) (interchain with G-Cter in SUMO2) cross-link. Residues 56–66 are compositionally biased toward low complexity; that stretch reads SGLSSTSVTTN. Residues 277 to 311 are compositionally biased toward polar residues; the sequence is ADGTSSSTSTYQLQESLQGLTSQPGEFDTVQSPST. A Phosphoserine modification is found at serine 338. Aspartate 352 serves as the catalytic Nucleophile. Mg(2+)-binding residues include aspartate 352, aspartate 354, and aspartate 580. Catalysis depends on aspartate 354, which acts as the Proton donor.

It belongs to the HAD-like hydrolase superfamily. EYA family. Interacts with SIX3; translocates EYA4 from the cytoplasm to the nucleus and promotes activation of their target genes. Mg(2+) serves as cofactor. In the embryo, expressed mainly in the craniofacial mesenchyme, dermamyotome and limb.

Its subcellular location is the cytoplasm. The protein localises to the nucleus. The catalysed reaction is O-phospho-L-tyrosyl-[protein] + H2O = L-tyrosyl-[protein] + phosphate. Tyrosine phosphatase that specifically dephosphorylates 'Tyr-142' of histone H2AX (H2AXY142ph). 'Tyr-142' phosphorylation of histone H2AX plays a central role in DNA repair and acts as a mark that distinguishes between apoptotic and repair responses to genotoxic stress. Promotes efficient DNA repair by dephosphorylating H2AX, promoting the recruitment of DNA repair complexes containing MDC1. Its function as histone phosphatase probably explains its role in transcription regulation during organogenesis. May be involved in development of the eye. In Mus musculus (Mouse), this protein is Protein phosphatase EYA4 (Eya4).